Here is a 372-residue protein sequence, read N- to C-terminus: Queuine tRNA-ribosyltransferase (372 aa).

The active-site Proton acceptor is Asp-92. Substrate-binding positions include 92–96, Asp-146, Gln-188, and Gly-215; that span reads DSGGY. Positions 246–252 are RNA binding; it reads GIGSLRE. Asp-265 functions as the Nucleophile in the catalytic mechanism. Positions 270-274 are RNA binding; important for wobble base 34 recognition; sequence TRLGR. Residues Cys-303, Cys-305, Cys-308, and His-334 each coordinate Zn(2+).

It belongs to the queuine tRNA-ribosyltransferase family. Homodimer. Within each dimer, one monomer is responsible for RNA recognition and catalysis, while the other monomer binds to the replacement base PreQ1. It depends on Zn(2+) as a cofactor.

The catalysed reaction is 7-aminomethyl-7-carbaguanine + guanosine(34) in tRNA = 7-aminomethyl-7-carbaguanosine(34) in tRNA + guanine. It functions in the pathway tRNA modification; tRNA-queuosine biosynthesis. Catalyzes the base-exchange of a guanine (G) residue with the queuine precursor 7-aminomethyl-7-deazaguanine (PreQ1) at position 34 (anticodon wobble position) in tRNAs with GU(N) anticodons (tRNA-Asp, -Asn, -His and -Tyr). Catalysis occurs through a double-displacement mechanism. The nucleophile active site attacks the C1' of nucleotide 34 to detach the guanine base from the RNA, forming a covalent enzyme-RNA intermediate. The proton acceptor active site deprotonates the incoming PreQ1, allowing a nucleophilic attack on the C1' of the ribose to form the product. After dissociation, two additional enzymatic reactions on the tRNA convert PreQ1 to queuine (Q), resulting in the hypermodified nucleoside queuosine (7-(((4,5-cis-dihydroxy-2-cyclopenten-1-yl)amino)methyl)-7-deazaguanosine). In Prochlorococcus marinus subsp. pastoris (strain CCMP1986 / NIES-2087 / MED4), this protein is Queuine tRNA-ribosyltransferase.